Reading from the N-terminus, the 62-residue chain is Beta-defensin 33 (62 aa).

A signal peptide spans 1–20 (MRLLFLLFILLVCLAQTTSG). Intrachain disulfides connect Cys30/Cys59, Cys37/Cys52, and Cys45/Cys60.

It belongs to the beta-defensin family.

The protein resides in the secreted. Functionally, has antibacterial activity. In Mus musculus (Mouse), this protein is Beta-defensin 33 (Defb33).